Here is a 327-residue protein sequence, read N- to C-terminus: Fructose import binding protein FruE (327 aa).

Positions 1–22 are cleaved as a signal peptide; the sequence is MKNWKKAIALVASAAALVSVAA. Cysteine 23 carries N-palmitoyl cysteine lipidation. The S-diacylglycerol cysteine moiety is linked to residue cysteine 23.

It belongs to the bacterial solute-binding protein 2 family. As to quaternary structure, the complex is composed of an ATP-binding protein (FruK), two transmembrane proteins (FruF and FruG) and a solute-binding protein (FruE).

The protein resides in the cell membrane. Part of the high-affinity ABC transporter complex FruEKFG involved in fructose uptake. Can also transport ribose and xylose, with lower affinity. Binds fructose, ribose and xylose, with fructose as the preferred substrate. This is Fructose import binding protein FruE from Bifidobacterium longum (strain NCC 2705).